A 328-amino-acid polypeptide reads, in one-letter code: Phosphate acyltransferase (328 aa).

This sequence belongs to the PlsX family. As to quaternary structure, homodimer. Probably interacts with PlsY.

The protein localises to the cytoplasm. It carries out the reaction a fatty acyl-[ACP] + phosphate = an acyl phosphate + holo-[ACP]. Its pathway is lipid metabolism; phospholipid metabolism. In terms of biological role, catalyzes the reversible formation of acyl-phosphate (acyl-PO(4)) from acyl-[acyl-carrier-protein] (acyl-ACP). This enzyme utilizes acyl-ACP as fatty acyl donor, but not acyl-CoA. The protein is Phosphate acyltransferase of Campylobacter jejuni subsp. doylei (strain ATCC BAA-1458 / RM4099 / 269.97).